The following is a 424-amino-acid chain: Lactate racemase (424 aa).

72 to 75 (DHTR) serves as a coordination point for Ni(II)-pyridinium-3,5-bisthiocarboxylate mononucleotide. Catalysis depends on proton donor/acceptor residues histidine 108 and histidine 174. Ni(II)-pyridinium-3,5-bisthiocarboxylate mononucleotide is bound by residues lysine 184 and histidine 200. Substrate is bound by residues glutamine 295 and lysine 298.

The protein belongs to the lactate racemase family. In terms of assembly, homodimer. Ni(II)-pyridinium-3,5-bisthiocarboxylate mononucleotide serves as cofactor.

It carries out the reaction (S)-lactate = (R)-lactate. With respect to regulation, activation of the apo-enzyme requires the three accessory proteins LarB, LarE and LarC, that are involved in the biosynthesis of the nickel-pincer cofactor of LarA. Inhibited by sulfite that behaves as a mixed inhibitor. Functionally, catalyzes the interconversion between the D- and L-isomers of lactate. May act as a rescue enzyme to ensure D-lactate production in physiological conditions where its production by the D-lactate dehydrogenase LdhD is not sufficient. D-Lactate is absolutely required for growth of L.plantarum and is an essential component of the cell wall peptidoglycan in this species, where it is incorporated as the last residue of the muramoyl-pentadepsipeptide peptidoglycan precursor; its incorporation confers high level of vancomycin resistance. The chain is Lactate racemase from Lactiplantibacillus plantarum (strain ATCC BAA-793 / NCIMB 8826 / WCFS1) (Lactobacillus plantarum).